The sequence spans 81 residues: Photosystem I iron-sulfur center (81 aa).

4Fe-4S ferredoxin-type domains follow at residues 2–31 and 39–68; these read SHTV…MVPW and IASS…IRVY. [4Fe-4S] cluster-binding residues include C11, C14, C17, C21, C48, C51, C54, and C58.

In terms of assembly, the cyanobacterial PSI reaction center is composed of one copy each of PsaA,B,C,D,E,F,I,J,K,L,M and X, and forms trimeric complexes. It depends on [4Fe-4S] cluster as a cofactor.

The protein localises to the cellular thylakoid membrane. The enzyme catalyses reduced [plastocyanin] + hnu + oxidized [2Fe-2S]-[ferredoxin] = oxidized [plastocyanin] + reduced [2Fe-2S]-[ferredoxin]. Apoprotein for the two 4Fe-4S centers FA and FB of photosystem I (PSI); essential for photochemical activity. FB is the terminal electron acceptor of PSI, donating electrons to ferredoxin. The C-terminus interacts with PsaA/B/D and helps assemble the protein into the PSI complex. Required for binding of PsaD and PsaE to PSI. PSI is a plastocyanin/cytochrome c6-ferredoxin oxidoreductase, converting photonic excitation into a charge separation, which transfers an electron from the donor P700 chlorophyll pair to the spectroscopically characterized acceptors A0, A1, FX, FA and FB in turn. The chain is Photosystem I iron-sulfur center from Microchaete diplosiphon (Fremyella diplosiphon).